Here is a 278-residue protein sequence, read N- to C-terminus: MVRVIAISNLRLAQAFVDYMATRHVALEVKPDSQGAEIWLTDDEQLPQVQHELEQFLLDPLNPRYQAASWQSGNLHSNLPYQRFSYLQTLRSQAGPLTLSVMVLCIAIYILMQIVGDGAVMSWLAWPRDNSQYLQIWRWVSHAFLHFSLLHILFNLMWWWYLAGQMEKRLGTGKLLVLTIVSALFSGWGQSLFSGVNFGGLSGVVYALMGYVWLTGERAPERGISLPRGLMAFSVLWLVAGYFDILGLSIANAAHVSGLIIGLLMAFWDTRNSAKTTQ.

The next 6 membrane-spanning stretches (helical) occupy residues 95 to 115, 143 to 163, 170 to 190, 192 to 212, 224 to 241, and 245 to 267; these read GPLTLSVMVLCIAIYILMQIV, AFLHFSLLHILFNLMWWWYLA, LGTGKLLVLTIVSALFSGWGQ, LFSGVNFGGLSGVVYALMGYV, ISLPRGLMAFSVLWLVAG, and ILGLSIANAAHVSGLIIGLLMAF. Ser202 (nucleophile) is an active-site residue. The active site involves His255.

Belongs to the peptidase S54 family.

It localises to the cell inner membrane. It catalyses the reaction Cleaves type-1 transmembrane domains using a catalytic dyad composed of serine and histidine that are contributed by different transmembrane domains.. Functionally, rhomboid-type serine protease that catalyzes intramembrane proteolysis. The polypeptide is Rhomboid protease GlpG (Yersinia enterocolitica serotype O:8 / biotype 1B (strain NCTC 13174 / 8081)).